Reading from the N-terminus, the 247-residue chain is C-X-C motif chemokine 16 (247 aa).

Residues 1 to 26 (MRRGFGPLALTLFLFFFALLTLPGDG) form the signal peptide. The Extracellular portion of the chain corresponds to 27-198 (NQGSVAGSCY…EPGAGAGTQA (172 aa)). 2 cysteine pairs are disulfide-bonded: cysteine 35–cysteine 65 and cysteine 37–cysteine 79. Positions 120 to 152 (IPEATEGKPPDTSTAVQFQSTQQSTFPSGAPSL) are disordered. Residues 131-147 (TSTAVQFQSTQQSTFPS) are compositionally biased toward low complexity. The chain crosses the membrane as a helical span at residues 199 to 219 (LVPVLSLLAIVFFLVAAMVCV). The Cytoplasmic portion of the chain corresponds to 220–247 (LCNRRVTRQSSSGLQLCYTPVEPRPQGL).

This sequence belongs to the intercrine alpha (chemokine CxC) family. Post-translationally, glycosylated.

The protein localises to the membrane. In terms of biological role, induces a strong chemotactic response. Induces calcium mobilization. Binds to CXCR6/Bonzo. Also acts as a scavenger receptor on macrophages, which specifically binds to OxLDL (oxidized low density lipoprotein), suggesting that it may be involved in pathophysiology such as atherogenesis. This is C-X-C motif chemokine 16 (Cxcl16) from Rattus norvegicus (Rat).